A 217-amino-acid polypeptide reads, in one-letter code: Small ribosomal subunit protein uS3c (217 aa).

In terms of domain architecture, KH type-2 spans 47–119; it reads VRTHIKSSSN…KLHIAIEKVA (73 aa).

The protein belongs to the universal ribosomal protein uS3 family. As to quaternary structure, part of the 30S ribosomal subunit.

It localises to the plastid. It is found in the chloroplast. This Pinus koraiensis (Korean pine) protein is Small ribosomal subunit protein uS3c (rps3).